A 451-amino-acid chain; its full sequence is Exodeoxyribonuclease 7 large subunit (451 aa).

The protein belongs to the XseA family. In terms of assembly, heterooligomer composed of large and small subunits.

It is found in the cytoplasm. It catalyses the reaction Exonucleolytic cleavage in either 5'- to 3'- or 3'- to 5'-direction to yield nucleoside 5'-phosphates.. Functionally, bidirectionally degrades single-stranded DNA into large acid-insoluble oligonucleotides, which are then degraded further into small acid-soluble oligonucleotides. This is Exodeoxyribonuclease 7 large subunit from Thiobacillus denitrificans (strain ATCC 25259 / T1).